Here is a 582-residue protein sequence, read N- to C-terminus: Aspartate--tRNA(Asp/Asn) ligase (582 aa).

Residue Glu177 coordinates L-aspartate. The interval 201–204 (QLFK) is aspartate. L-aspartate is bound at residue Arg223. Residues 223–225 (RDE) and Gln232 each bind ATP. Residue His447 participates in L-aspartate binding. Glu481 is an ATP binding site. Arg488 lines the L-aspartate pocket. 533–536 (GLDR) is an ATP binding site.

It belongs to the class-II aminoacyl-tRNA synthetase family. Type 1 subfamily. As to quaternary structure, homodimer.

The protein localises to the cytoplasm. It catalyses the reaction tRNA(Asx) + L-aspartate + ATP = L-aspartyl-tRNA(Asx) + AMP + diphosphate. Aspartyl-tRNA synthetase with relaxed tRNA specificity since it is able to aspartylate not only its cognate tRNA(Asp) but also tRNA(Asn). Reaction proceeds in two steps: L-aspartate is first activated by ATP to form Asp-AMP and then transferred to the acceptor end of tRNA(Asp/Asn). This chain is Aspartate--tRNA(Asp/Asn) ligase, found in Chlamydia trachomatis serovar A (strain ATCC VR-571B / DSM 19440 / HAR-13).